A 507-amino-acid chain; its full sequence is Cytochrome P450 monooxygenase helB2 (507 aa).

A signal peptide spans 1–22; that stretch reads MALPIILCLAVILWTSWRLLDA. A heme-binding site is contributed by cysteine 436.

This sequence belongs to the cytochrome P450 family. The cofactor is heme.

It participates in mycotoxin biosynthesis. Cytochrome P450 monooxygenase; part of the gene cluster that mediates the biosynthesis of helvolic acid, an antibacterial nortriterpenoid. Protostadienol synthase helA cyclizes (3S)-oxidosqualene to (17Z)-protosta-17(20),24-dien-3-beta-ol (protostadienol). The synthesis of protostadienol is followed by several steps of monooxygenation, dehydrogenation, and acyl transfer to yield the final helvolic acid. Following the cyclization to the tetracyclic protostadienol by helA, cytochrome P450 monooxygenases helB1-mediated and helB2-mediated oxidation at C-4 and C-16, acyltransferase helD2-dependent acetylation of 16-OH, oxidation of C-21 by cytochrome P450 monooxygenase helB4, and short chain dehydrogenase helC-dependent oxidative decarboxylation yield the fusidane skeleton. This intermediate is further modified in three additional steps mediated by the cytochrome P450 monooxygenase helB3, the acyltransferase helD1, and the 3-ketosteroid 1-dehydrogenase helE to give helvolic acid. Compared with the late stages in the biosynthesis of helvolic acid, enzymes involved in the early stage modifications act in a relatively strict order. The hydroxylation of C-16 by helB1 and subsequent acetylation by helD2 should occur before the helB3-mediated oxidation of C-21. C-4 demethylation in fusidane-type antibiotics proceeds in an unusual manner though it is also achieved by oxidative decarboxylation. The methyl group at C-4 beta position is oxidized by helB1 and subsequently removed by the short chain dehydrogenase helC. This Aspergillus fumigatus (strain ATCC MYA-4609 / CBS 101355 / FGSC A1100 / Af293) (Neosartorya fumigata) protein is Cytochrome P450 monooxygenase helB2.